A 66-amino-acid polypeptide reads, in one-letter code: Large ribosomal subunit protein bL33c (66 aa).

The protein belongs to the bacterial ribosomal protein bL33 family.

It is found in the plastid. It localises to the chloroplast. The protein is Large ribosomal subunit protein bL33c of Citrus sinensis (Sweet orange).